We begin with the raw amino-acid sequence, 453 residues long: tRNA modification GTPase MnmE (453 aa).

3 residues coordinate (6S)-5-formyl-5,6,7,8-tetrahydrofolate: arginine 22, glutamate 79, and lysine 119. In terms of domain architecture, TrmE-type G spans 215 to 376 (GMKVVIAGRP…LRQHLKECMG (162 aa)). Position 225 (asparagine 225) interacts with K(+). GTP is bound by residues 225–230 (NAGKSS), 244–250 (TDIAGTT), 269–272 (DTAG), and 334–337 (NKAD). Serine 229 is a Mg(2+) binding site. K(+) contacts are provided by threonine 244, isoleucine 246, and threonine 249. Threonine 250 lines the Mg(2+) pocket. Lysine 453 provides a ligand contact to (6S)-5-formyl-5,6,7,8-tetrahydrofolate.

It belongs to the TRAFAC class TrmE-Era-EngA-EngB-Septin-like GTPase superfamily. TrmE GTPase family. Homodimer. Heterotetramer of two MnmE and two MnmG subunits. K(+) is required as a cofactor.

The protein resides in the cytoplasm. Its function is as follows. Exhibits a very high intrinsic GTPase hydrolysis rate. Involved in the addition of a carboxymethylaminomethyl (cmnm) group at the wobble position (U34) of certain tRNAs, forming tRNA-cmnm(5)s(2)U34. The chain is tRNA modification GTPase MnmE from Vibrio cholerae serotype O1 (strain ATCC 39315 / El Tor Inaba N16961).